The sequence spans 146 residues: Putative pre-16S rRNA nuclease (146 aa).

The protein belongs to the YqgF nuclease family.

Its subcellular location is the cytoplasm. Its function is as follows. Could be a nuclease involved in processing of the 5'-end of pre-16S rRNA. The chain is Putative pre-16S rRNA nuclease from Mycoplasmopsis pulmonis (strain UAB CTIP) (Mycoplasma pulmonis).